The following is a 397-amino-acid chain: Phosphoglycerate kinase (397 aa).

Residues Asp22 to Asn24, Arg37, His60 to Arg63, Arg119, and Arg152 each bind substrate. Residues Lys202, Glu324, and Gly354–Thr357 contribute to the ATP site.

It belongs to the phosphoglycerate kinase family. Monomer.

It is found in the cytoplasm. The catalysed reaction is (2R)-3-phosphoglycerate + ATP = (2R)-3-phospho-glyceroyl phosphate + ADP. It functions in the pathway carbohydrate degradation; glycolysis; pyruvate from D-glyceraldehyde 3-phosphate: step 2/5. The polypeptide is Phosphoglycerate kinase (Rhizorhabdus wittichii (strain DSM 6014 / CCUG 31198 / JCM 15750 / NBRC 105917 / EY 4224 / RW1) (Sphingomonas wittichii)).